Consider the following 457-residue polypeptide: Oxygen-independent coproporphyrinogen III oxidase (457 aa).

The region spanning 47–279 is the Radical SAM core domain; that stretch reads LKNPMPLSLY…EILESLISFL (233 aa). Y56 contacts S-adenosyl-L-methionine. The [4Fe-4S] cluster site is built by C62 and C66. F68 contacts S-adenosyl-L-methionine. C69 lines the [4Fe-4S] cluster pocket. Residues G113, 114–115, E147, Q174, R186, D211, A245, and I331 each bind S-adenosyl-L-methionine; that span reads GT.

The protein belongs to the anaerobic coproporphyrinogen-III oxidase family. Monomer. [4Fe-4S] cluster serves as cofactor.

Its subcellular location is the cytoplasm. It carries out the reaction coproporphyrinogen III + 2 S-adenosyl-L-methionine = protoporphyrinogen IX + 2 5'-deoxyadenosine + 2 L-methionine + 2 CO2. It participates in porphyrin-containing compound metabolism; protoporphyrin-IX biosynthesis; protoporphyrinogen-IX from coproporphyrinogen-III (AdoMet route): step 1/1. Involved in the heme biosynthesis. Catalyzes the anaerobic oxidative decarboxylation of propionate groups of rings A and B of coproporphyrinogen III to yield the vinyl groups in protoporphyrinogen IX. The polypeptide is Oxygen-independent coproporphyrinogen III oxidase (hemN) (Helicobacter pylori (strain ATCC 700392 / 26695) (Campylobacter pylori)).